The sequence spans 1026 residues: Contactin-4 (1026 aa).

A signal peptide spans 1-18 (MRLPWELLVLQSFILCLA). Ig-like C2-type domains lie at 32-117 (PSPV…AKLQ), 122-207 (DNFK…KVLG), 225-311 (PKIE…GQLT), 316-400 (PNWI…AELS), 406-493 (PDFS…GNLV), and 497-586 (PTRV…DRLS). 6 disulfides stabilise this stretch: Cys50–Cys100, Cys144–Cys194, Cys247–Cys295, Cys337–Cys384, Cys429–Cys477, and Cys519–Cys576. Residues Asn65, Asn90, and Asn191 are each glycosylated (N-linked (GlcNAc...) asparagine). Asn370, Asn375, and Asn466 each carry an N-linked (GlcNAc...) asparagine glycan. 4 consecutive Fibronectin type-III domains span residues 599-697 (PPEA…TEEA), 702-799 (TPAN…SAEE), 804-899 (PPAS…TRKP), and 900-995 (PPSQ…ISNA). The interval 685-710 (PSRPSEKRRTEEALPEVTPANVSGGG) is disordered. Residues 687-696 (RPSEKRRTEE) show a composition bias toward basic and acidic residues. Asn705, Asn764, Asn858, Asn893, Asn911, Asn929, and Asn954 each carry an N-linked (GlcNAc...) asparagine glycan. Positions 886–896 (GPSSATVNVTT) are enriched in polar residues. The interval 886-907 (GPSSATVNVTTRKPPPSQPPGN) is disordered. Ser1000 carries the GPI-anchor amidated serine lipid modification. Positions 1001 to 1026 (GASTSNACTLSAISTIMISLTARSSL) are cleaved as a propeptide — removed in mature form.

The protein belongs to the immunoglobulin superfamily. Contactin family. As to quaternary structure, interacts with PTPRG. As to expression, mainly expressed in brain. Highly expressed in cerebellum and weakly expressed in corpus callosum, caudate nucleus, amygdala and spinal cord. Also expressed in testis, pancreas, thyroid, uterus, small intestine and kidney. Not expressed in skeletal muscle. Isoform 2 is weakly expressed in cerebral cortex.

It localises to the cell membrane. It is found in the secreted. Its function is as follows. Contactins mediate cell surface interactions during nervous system development. Has some neurite outgrowth-promoting activity. May be involved in synaptogenesis. The sequence is that of Contactin-4 (CNTN4) from Homo sapiens (Human).